Consider the following 555-residue polypeptide: Trehalase (555 aa).

A signal peptide spans 1–16; that stretch reads MIPFLLMVAFADTVLQ. Residue Asn-46 is glycosylated (N-linked (GlcNAc...) asparagine). Substrate contacts are provided by residues Arg-164, 171 to 172, and Asn-208; that span reads WD. Residue Asn-216 is glycosylated (N-linked (GlcNAc...) asparagine). Substrate is bound by residues 217 to 219, 282 to 284, and Gly-316; these read RSQ and RPE. The active-site Proton donor/acceptor is Asp-318. N-linked (GlcNAc...) asparagine glycans are attached at residues Asn-334 and Asn-371. Glu-516 acts as the Proton donor/acceptor in catalysis. Glu-531 contributes to the substrate binding site.

Belongs to the glycosyl hydrolase 37 family. As to expression, bean-shaped accessory glands (bags).

The protein localises to the secreted. The enzyme catalyses alpha,alpha-trehalose + H2O = alpha-D-glucose + beta-D-glucose. This chain is Trehalase, found in Tenebrio molitor (Yellow mealworm beetle).